Here is a 344-residue protein sequence, read N- to C-terminus: Mitogen-activated protein kinase mpkC (344 aa).

A Protein kinase domain is found at 19-298 (YANVQPVGLG…AETALQHPYL (280 aa)). ATP-binding positions include 25-33 (VGLGAFGLV) and K48. Catalysis depends on D140, which acts as the Proton acceptor. T170 carries the post-translational modification Phosphothreonine. The short motif at 170–172 (TGY) is the TXY element. The residue at position 172 (Y172) is a Phosphotyrosine.

The protein belongs to the protein kinase superfamily. Ser/Thr protein kinase family. MAP kinase subfamily. HOG1 sub-subfamily. Requires Mg(2+) as cofactor. In terms of processing, dually phosphorylated on Thr-170 and Tyr-172, which activates the enzyme.

It carries out the reaction L-seryl-[protein] + ATP = O-phospho-L-seryl-[protein] + ADP + H(+). The catalysed reaction is L-threonyl-[protein] + ATP = O-phospho-L-threonyl-[protein] + ADP + H(+). Its activity is regulated as follows. Activated by tyrosine and threonine phosphorylation. Functionally, mitogen-activated protein kinase required for growth on media where sorbitol or mannitol is the sole carbon source. The sequence is that of Mitogen-activated protein kinase mpkC (mpkC) from Aspergillus oryzae (strain ATCC 42149 / RIB 40) (Yellow koji mold).